Here is a 684-residue protein sequence, read N- to C-terminus: ATP-dependent zinc metalloprotease FtsH (684 aa).

Residues 1 to 21 lie on the Cytoplasmic side of the membrane; that stretch reads MENKNDMFNKTPKSGKPKMFR. A helical membrane pass occupies residues 22–42; sequence FNLYWMYGLIFIMLVALYMTN. Over 43-138 the chain is Periplasmic; sequence DSSGTKELGW…QVRFEEGDDA (96 aa). A helical membrane pass occupies residues 139-159; sequence IWNFLVSFGPIILLIGVWMFL. Topologically, residues 160 to 684 are cytoplasmic; that stretch reads MRRMSGGTGA…TEENKTGKIA (525 aa). 236 to 243 contacts ATP; that stretch reads GPPGTGKT. His-459 lines the Zn(2+) pocket. Glu-460 is a catalytic residue. Zn(2+) is bound by residues His-463 and Asp-534. Positions 647 to 662 are enriched in basic and acidic residues; the sequence is EKANGKNKENADKEAE. The tract at residues 647 to 684 is disordered; sequence EKANGKNKENADKEAEADATTENVTDTPTEENKTGKIA.

In the central section; belongs to the AAA ATPase family. This sequence in the C-terminal section; belongs to the peptidase M41 family. Homohexamer. The cofactor is Zn(2+).

It is found in the cell inner membrane. Its function is as follows. Acts as a processive, ATP-dependent zinc metallopeptidase for both cytoplasmic and membrane proteins. Plays a role in the quality control of integral membrane proteins. In Parabacteroides distasonis (strain ATCC 8503 / DSM 20701 / CIP 104284 / JCM 5825 / NCTC 11152), this protein is ATP-dependent zinc metalloprotease FtsH.